Here is a 307-residue protein sequence, read N- to C-terminus: MmsAB operon regulatory protein (307 aa).

One can recognise an HTH araC/xylS-type domain in the interval 201–299 (DGLHAYMREH…GLSPSAYRQR (99 aa)). DNA-binding regions (H-T-H motif) lie at residues 218–239 (ERLAAFCNLSKFHFVSRYKAIT) and 266–289 (VARVGQAVGYDDSYYFSRLFSKVM).

Functionally, regulatory protein for the mmsAB operon. Activates the transcription of the mmsAB genes. The chain is MmsAB operon regulatory protein from Pseudomonas aeruginosa (strain ATCC 15692 / DSM 22644 / CIP 104116 / JCM 14847 / LMG 12228 / 1C / PRS 101 / PAO1).